Here is a 1061-residue protein sequence, read N- to C-terminus: Ceruloplasmin (1061 aa).

The signal sequence occupies residues 1-19; that stretch reads MKFLLLSTFIFLYSSLALA. Plastocyanin-like domains follow at residues 20–199, 208–356, 369–555, 565–713, 725–895, and 903–1057; these read RDKH…LILC, KEKN…VRDC, HVRH…MKIC, RQKD…VNQC, GERT…LIVC, and FSPK…VEQE. Residues Tyr55, Gly64, and Tyr67 each contribute to the Na(+) site. Residues His120 and His122 each coordinate Cu(2+). An O2-binding site is contributed by His120. Lys128 serves as a coordination point for Ca(2+). N-linked (GlcNAc...) asparagine glycosylation is present at Asn138. Ca(2+) contacts are provided by Gln143, Asp146, and Asp147. Cysteines 173 and 199 form a disulfide. Cu(2+) contacts are provided by His179 and His181. His179 contacts O2. The N-linked (GlcNAc...) asparagine glycan is linked to Asn226. Residue Ser255 coordinates Na(+). Cys275 and Cys356 are joined by a disulfide. The Cu(2+) site is built by His294, Cys337, and His342. Asn396 is a glycosylation site (N-linked (GlcNAc...) asparagine). 3 residues coordinate Na(+): Phe407, Gly416, and Tyr419. Residues Cys529 and Cys555 are joined by a disulfide bond. Asn583 is a glycosylation site (N-linked (GlcNAc...) asparagine). Ser612 is a Na(+) binding site. Cys632 and Cys713 are disulfide-bonded. Residues His651, Cys694, His699, and Met704 each contribute to the Cu(2+) site. Cys694 functions as the Nucleophile; for glutathione peroxidase activity in the catalytic mechanism. Asn757 is a glycosylation site (N-linked (GlcNAc...) asparagine). Phe762, Gly771, and Tyr774 together coordinate Na(+). Cys869 and Cys895 form a disulfide bridge. Residue Asn921 is glycosylated (N-linked (GlcNAc...) asparagine). Position 950 (Ser950) interacts with Na(+). Cu(2+) is bound by residues His989, His992, His994, His1034, Cys1035, His1036, His1040, and Met1045. His992 and His994 together coordinate O2. His1036 is a binding site for O2.

The protein belongs to the multicopper oxidase family. As to quaternary structure, found in a complex with MPO and LTF; interacts directly with MPO and LTF, which allows Fe(3+) incorporation into LTF, activation of CP ferroxidase activity and protection of CP antioxidant properties by MPO. It depends on Cu(2+) as a cofactor. Expressed in many tissues, including liver, eye and brain.

The protein resides in the secreted. It catalyses the reaction 4 Fe(2+) + O2 + 4 H(+) = 4 Fe(3+) + 2 H2O. The enzyme catalyses 4 Cu(+) + O2 + 4 H(+) = 4 Cu(2+) + 2 H2O. The catalysed reaction is a hydroperoxide + 2 glutathione = an alcohol + glutathione disulfide + H2O. It carries out the reaction 4 nitric oxide + O2 + 2 H2O = 4 nitrite + 4 H(+). It catalyses the reaction 2 glutathione + H2O2 = glutathione disulfide + 2 H2O. Multifunctional blue, copper-binding (6-7 atoms per molecule) glycoprotein. It has ferroxidase activity oxidizing Fe(2+) to Fe(3+) without releasing radical oxygen species. It is involved in iron transport across the cell membrane. Copper ions provide a large number of enzymatic activites. Oxidizes highly toxic ferrous ions to the ferric state for further incorporation onto apo-transferrins, catalyzes Cu(+) oxidation and promotes the oxidation of biogenic amines such as norepinephrin and serotonin. Provides Cu(2+) ions for the ascorbate-mediated deaminase degradation of the heparan sulfate chains of GPC1. Has glutathione peroxidase-like activity, can remove both hydrogen peroxide and lipid hydroperoxide in the presence of thiols. Also shows NO-oxidase and NO2 synthase activities that determine endocrine NO homeostasis. This chain is Ceruloplasmin (Cp), found in Mus musculus (Mouse).